The following is a 69-amino-acid chain: DNA-directed RNA polymerase subunit epsilon (69 aa).

It belongs to the RNA polymerase subunit epsilon family. As to quaternary structure, RNAP is composed of a core of 2 alpha, a beta and a beta' subunit. The core is associated with a delta subunit, and at least one of epsilon or omega. When a sigma factor is associated with the core the holoenzyme is formed, which can initiate transcription.

It carries out the reaction RNA(n) + a ribonucleoside 5'-triphosphate = RNA(n+1) + diphosphate. Its function is as follows. A non-essential component of RNA polymerase (RNAP). This is DNA-directed RNA polymerase subunit epsilon from Shouchella clausii (strain KSM-K16) (Alkalihalobacillus clausii).